An 89-amino-acid chain; its full sequence is Tuberculin-active protein (89 aa).

Cys27 and Cys59 are oxidised to a cystine. The disordered stretch occupies residues 61–89 (DGGSESEGKNGSQMRLIADVGPESATVAK).

Tuberculin is the soluble, proteinaceous cell substance of the bacterium, to which infected animals become hypersensitive and react characteristically to dermal injections. This is Tuberculin-active protein from Mycobacterium tuberculosis.